Here is a 300-residue protein sequence, read N- to C-terminus: Protein N-terminal and lysine N-methyltransferase EFM7 (300 aa).

Residues W75, 101–103, D123, W156, and S179 contribute to the S-adenosyl-L-methionine site; that span reads GAG.

Belongs to the class I-like SAM-binding methyltransferase superfamily. EFM7 family.

Its subcellular location is the cytoplasm. In terms of biological role, S-adenosyl-L-methionine-dependent protein methyltransferase that trimethylates the N-terminal glycine 'Gly-2' of elongation factor 1-alpha, before also catalyzing the mono- and dimethylation of 'Lys-3'. This is Protein N-terminal and lysine N-methyltransferase EFM7 from Cryptococcus neoformans var. neoformans serotype D (strain JEC21 / ATCC MYA-565) (Filobasidiella neoformans).